The sequence spans 238 residues: MNSDANVDLTEIAKFEAIASRWWDMEGEFKPLHQINPVRLDWITDKSGGLFGKRILDIGCGGGILSESMARRGAHVTGIDMGKEPLGVARLHALEQGVELQYQQMTAEEHASQTPDQYDVVTCMEMLEHVPDPASVLRAIATLVRPGGRVFISTINRNPKAYLMMIIGAEYLMKMVPKGTHDHKKFITPAELCRMGEAAGLLVRDMSGVHYAPLSNQFKLGKNVDVNYMVEFIRPEHG.

S-adenosyl-L-methionine is bound by residues Arg-39, Gly-59, Asp-80, and Met-124.

The protein belongs to the methyltransferase superfamily. UbiG/COQ3 family.

The enzyme catalyses a 3-demethylubiquinol + S-adenosyl-L-methionine = a ubiquinol + S-adenosyl-L-homocysteine + H(+). It carries out the reaction a 3-(all-trans-polyprenyl)benzene-1,2-diol + S-adenosyl-L-methionine = a 2-methoxy-6-(all-trans-polyprenyl)phenol + S-adenosyl-L-homocysteine + H(+). It functions in the pathway cofactor biosynthesis; ubiquinone biosynthesis. Functionally, O-methyltransferase that catalyzes the 2 O-methylation steps in the ubiquinone biosynthetic pathway. The protein is Ubiquinone biosynthesis O-methyltransferase of Aeromonas salmonicida (strain A449).